The chain runs to 116 residues: Large ribosomal subunit protein uL18 (116 aa).

This sequence belongs to the universal ribosomal protein uL18 family. In terms of assembly, part of the 50S ribosomal subunit; part of the 5S rRNA/L5/L18/L25 subcomplex. Contacts the 5S and 23S rRNAs.

In terms of biological role, this is one of the proteins that bind and probably mediate the attachment of the 5S RNA into the large ribosomal subunit, where it forms part of the central protuberance. In Shewanella putrefaciens (strain CN-32 / ATCC BAA-453), this protein is Large ribosomal subunit protein uL18.